We begin with the raw amino-acid sequence, 764 residues long: MAATLKSLKLLRYQAFCSPSAFGAVRSVSYWNASSTQHGGQDPPGHISLCHSAKKVKNICSTFSSRRIPTTSSARPGLEFSKTSSSKASTLQLGSPRATGIDEENVEVFDSFENLRVFLQLRPEYRVHSYSASETSQLLSVSEGELILHKVRVNQNNLQAQVIVDYLCKLSSLPAEQHPVLLGSTSFALLCQLSVRKIKLFDTQDLINVLKAFVILGIPHSHSMLDVYETKCCHQVWEMSVDQLLLVADLWRYIGRKVPRFLNICCSYLNLRWKDLSLSQLVHLIYVIGENRQVSQDLMQKLESLILKYIDLINLEEVGTICLGFFKSKTNLSEFVMRKIGDLACADMQHLSSHSLVNIVKMFRFTHVDHINFMKQIGEIAPQRIPSLGVQGVMHLTLYCSALRFLDEGVMNAVAASLPPRVAQCRSKDVAKILWSFGTLNYKPPNAEEFYSSLINEIHRKMPEFNQYPEHLPTCLLGLAFLEYFPVELIDFALSPGFVRLAQERTKFDLIKELYTLDGTVVIECPDYRGNRLSTHLQREGSELLWYLAEKDMNSKPEFLETVFLLETMLGGPQYVKHHMILPHTRSSDLEVQLDVNLKPLPFNREATPAENVAKLKCEHVGVSLTDDLMNQLLKGKARGHFQGKTESEPGQQHMELENKAAVPLGGSLRNVADKSGAMEMAGLCPPACMQTPRMKLAIQFTNRNQYCYGSRDLLGLHNMKRRQLARLGYRVVELSYWEWLPLLKRTRLEKLAFLHEKVFTSAL.

A mitochondrion-targeting transit peptide spans 1 to 27 (MAATLKSLKLLRYQAFCSPSAFGAVRS). Residues 68-94 (IPTTSSARPGLEFSKTSSSKASTLQLG) are disordered. A compositionally biased stretch (polar residues) spans 81 to 93 (SKTSSSKASTLQL). Phosphoserine is present on Ser95. Lys507 carries the N6-acetyllysine modification. An RAP domain is found at 697 to 757 (LAIQFTNRNQ…RLEKLAFLHE (61 aa)).

It belongs to the FAST kinase family. As to quaternary structure, found in a complex with GRSF1, DDX28, DHX30 and FASTKD2. Associates with the 12S mitochondrial rRNA (12S mt-rRNA).

It is found in the mitochondrion matrix. The protein resides in the mitochondrion nucleoid. Functionally, plays an important role in the processing of non-canonical mitochondrial mRNA precursors. The protein is FAST kinase domain-containing protein 5, mitochondrial (FASTKD5) of Pongo abelii (Sumatran orangutan).